The sequence spans 1198 residues: Regulator of G-protein signaling 3 (1198 aa).

The C2 domain maps to 137–256 (GAGQLRLSID…TPDKEISGWY (120 aa)). Residues 299–376 (KITIPRGKDG…EIILLVWRMV (78 aa)) form the PDZ domain. Arg-448 bears the Omega-N-methylarginine mark. Residues 669–933 (QQLAASPPDS…GAEGGLSLRV (265 aa)) form a disordered region. The residue at position 674 (Ser-674) is a Phosphoserine. A compositionally biased stretch (basic and acidic residues) spans 679–697 (KMFETEADEKREMALEEGK). The segment covering 739 to 751 (EPLSSKDSATSEG) has biased composition (polar residues). Residues 753–773 (PPGPDAPPSKDVPPCQEPPPA) show a composition bias toward pro residues. Positions 877-906 (GDEEDAEEAEEVEEGEEGEEDEDEDTSDDN) are enriched in acidic residues. Positions 907–917 (YGERSEAKRSS) are enriched in basic and acidic residues. Ser-943, Ser-946, Ser-978, and Ser-1007 each carry phosphoserine. 2 disordered regions span residues 1007–1026 (SGAD…KSKN) and 1032–1056 (KNKL…ADKM). Positions 1073 to 1198 (SLEKLLVHKY…INQKKMSPPL (126 aa)) constitute an RGS domain.

Binds EFNB1 and EFNB2. Binds the GNB1-GNG2 heterodimer. Phosphorylated by cyclic GMP-dependent protein kinase. In terms of processing, ISGylated.

The protein localises to the cytoplasm. The protein resides in the nucleus. Its subcellular location is the cell membrane. Its function is as follows. Down-regulates signaling from heterotrimeric G-proteins by increasing the GTPase activity of the alpha subunits, thereby driving them into their inactive GDP-bound form. Down-regulates G-protein-mediated release of inositol phosphates and activation of MAP kinases. This Homo sapiens (Human) protein is Regulator of G-protein signaling 3 (RGS3).